Consider the following 367-residue polypeptide: o-succinylbenzoate synthase (367 aa).

The active-site Proton donor is the Lys164. Positions 189, 214, and 239 each coordinate Mg(2+). The active-site Proton acceptor is Lys263.

Belongs to the mandelate racemase/muconate lactonizing enzyme family. MenC type 2 subfamily. In terms of assembly, homodimer. It depends on a divalent metal cation as a cofactor.

The catalysed reaction is (1R,6R)-6-hydroxy-2-succinyl-cyclohexa-2,4-diene-1-carboxylate = 2-succinylbenzoate + H2O. It functions in the pathway quinol/quinone metabolism; 1,4-dihydroxy-2-naphthoate biosynthesis; 1,4-dihydroxy-2-naphthoate from chorismate: step 4/7. It participates in quinol/quinone metabolism; menaquinone biosynthesis. Converts 2-succinyl-6-hydroxy-2,4-cyclohexadiene-1-carboxylate (SHCHC) to 2-succinylbenzoate (OSB). Also acts as a N-succinylamino acid racemase (NSAR) that catalyzes the racemization of N-succinyl-L-phenylglycine. Since the gene is encoded in a menaquinone synthesis operon, OSB synthase is probably the physiological activity. A pathway that requires NSAR activity has not been identified in this species, so whether NSAR is also a biological activity is unknown. The protein is o-succinylbenzoate synthase of Enterococcus faecalis (strain ATCC 700802 / V583).